Reading from the N-terminus, the 224-residue chain is Urease accessory protein UreF (224 aa).

It belongs to the UreF family. As to quaternary structure, ureD, UreF and UreG form a complex that acts as a GTP-hydrolysis-dependent molecular chaperone, activating the urease apoprotein by helping to assemble the nickel containing metallocenter of UreC. The UreE protein probably delivers the nickel.

The protein localises to the cytoplasm. In terms of biological role, required for maturation of urease via the functional incorporation of the urease nickel metallocenter. The protein is Urease accessory protein UreF of Ectopseudomonas mendocina (strain ymp) (Pseudomonas mendocina).